Consider the following 308-residue polypeptide: Olfactory receptor 2T7 (308 aa).

Residues 1–17 (MPTLSFWVCSATPVSPG) lie on the Extracellular side of the membrane. The helical transmembrane segment at 18–40 (FFALILLVFVTSIASNVVKIILI) threads the bilayer. Topologically, residues 41–51 (HIDSRLHTPMY) are cytoplasmic. A helical transmembrane segment spans residues 52-74 (FLLSQLSLRDILYISTIVPKMLV). Residues 75–88 (DQVMSQRAISFAGC) are Extracellular-facing. Cys-88 and Cys-170 are oxidised to a cystine. Residues 89–109 (TAQHFLYLTLAGAEFFLLGLM) traverse the membrane as a helical segment. Residues 110-130 (SCDRYVAICNPLHYPDLMSRK) lie on the Cytoplasmic side of the membrane. Residues 131–151 (ICWLIVAAAWLGGSIDGFLLT) traverse the membrane as a helical segment. The Extracellular portion of the chain corresponds to 152–188 (PVTMQFPFCASREINHFFCEVPALLKLSCTDTSAYET). Residues 189-209 (AMYVCCIMMLLIPFSVISGSY) traverse the membrane as a helical segment. Over 210–235 (TRILITVYRMSEAEGRRKAVATCSSH) the chain is Cytoplasmic. The chain crosses the membrane as a helical span at residues 236 to 256 (MVVVSLFYGAAMYTYVLPHSY). Residues 257–262 (HTPEQD) are Extracellular-facing. The helical transmembrane segment at 263-283 (KAVSAFYTILTPMLNPLIYSL) threads the bilayer. Residues 284–308 (RNKDVTGALQKVVGRCVSSGKVTTF) are Cytoplasmic-facing.

Belongs to the G-protein coupled receptor 1 family.

The protein resides in the cell membrane. In terms of biological role, odorant receptor. The sequence is that of Olfactory receptor 2T7 (OR2T7) from Homo sapiens (Human).